The chain runs to 401 residues: Chorismate synthase (401 aa).

NADP(+)-binding residues include R40 and R46. FMN contacts are provided by residues 135 to 137 (RAS), 256 to 257 (QA), G300, 315 to 319 (KPIST), and R341.

Belongs to the chorismate synthase family. As to quaternary structure, homotetramer. Requires FMNH2 as cofactor.

The enzyme catalyses 5-O-(1-carboxyvinyl)-3-phosphoshikimate = chorismate + phosphate. It functions in the pathway metabolic intermediate biosynthesis; chorismate biosynthesis; chorismate from D-erythrose 4-phosphate and phosphoenolpyruvate: step 7/7. Its function is as follows. Catalyzes the anti-1,4-elimination of the C-3 phosphate and the C-6 proR hydrogen from 5-enolpyruvylshikimate-3-phosphate (EPSP) to yield chorismate, which is the branch point compound that serves as the starting substrate for the three terminal pathways of aromatic amino acid biosynthesis. This reaction introduces a second double bond into the aromatic ring system. This chain is Chorismate synthase, found in Mycobacterium avium (strain 104).